The following is a 544-amino-acid chain: Chaperonin GroEL (544 aa).

ATP is bound by residues 30-33 (TLGP), Lys51, 87-91 (DGTTT), Gly415, and Asp495.

It belongs to the chaperonin (HSP60) family. As to quaternary structure, forms a cylinder of 14 subunits composed of two heptameric rings stacked back-to-back. Interacts with the co-chaperonin GroES.

It is found in the cytoplasm. It carries out the reaction ATP + H2O + a folded polypeptide = ADP + phosphate + an unfolded polypeptide.. Functionally, together with its co-chaperonin GroES, plays an essential role in assisting protein folding. The GroEL-GroES system forms a nano-cage that allows encapsulation of the non-native substrate proteins and provides a physical environment optimized to promote and accelerate protein folding. This is Chaperonin GroEL from Neisseria meningitidis serogroup C (strain 053442).